The chain runs to 482 residues: Cardiolipin synthase (482 aa).

2 helical membrane-spanning segments follow: residues L4–F24 and W34–F54. PLD phosphodiesterase domains are found at residues L217 to Y244 and D395 to S422. Catalysis depends on residues H222, K224, D229, H400, K402, and D407.

It belongs to the phospholipase D family. Cardiolipin synthase subfamily.

Its subcellular location is the cell membrane. The catalysed reaction is 2 a 1,2-diacyl-sn-glycero-3-phospho-(1'-sn-glycerol) = a cardiolipin + glycerol. Its function is as follows. Catalyzes the reversible phosphatidyl group transfer from one phosphatidylglycerol molecule to another to form cardiolipin (CL) (diphosphatidylglycerol) and glycerol. The chain is Cardiolipin synthase (cls) from Listeria monocytogenes serotype 4a (strain HCC23).